Here is a 103-residue protein sequence, read N- to C-terminus: Putative membrane protein insertion efficiency factor (103 aa).

This sequence belongs to the UPF0161 family.

It localises to the cell membrane. Could be involved in insertion of integral membrane proteins into the membrane. The sequence is that of Putative membrane protein insertion efficiency factor from Clavibacter michiganensis subsp. michiganensis (strain NCPPB 382).